A 168-amino-acid polypeptide reads, in one-letter code: Sperm acrosome-associated protein 9 (168 aa).

Microtubule inner protein component of sperm flagellar doublet microtubules. Interacts with CABP1 and CALR. Interacts with INCA1. Interacts with microtubules. As to expression, testis-specific. Expressed in round spermatids.

It is found in the cytoplasm. It localises to the cytoplasmic vesicle. The protein resides in the secretory vesicle. The protein localises to the acrosome. Its subcellular location is the cytoskeleton. It is found in the cilium basal body. It localises to the flagellum axoneme. The protein resides in the cilium axoneme. The protein localises to the nucleus. In terms of biological role, microtubule inner protein (MIP) part of the dynein-decorated doublet microtubules (DMTs) of multiciliated respiratory cells and the distal singlet microtubules of monoflagellated spermatozoa. Forms an extensive interaction network cross-linking the lumen of axonemal doublet microtubules. The polypeptide is Sperm acrosome-associated protein 9 (Spaca9) (Rattus norvegicus (Rat)).